The chain runs to 134 residues: MSWQAYVDEHLMCDVGDGQGHHLTAAAIIGHDGSVWAQSANFPQFKPQEITDIMKDFDEPGHLAPTGMFLAGLKYMVIQGEPNAVIRGKKGAGGITIKKTGQSMVFGLYEEPVTPGQCNMVVERLGDYLIEQGL.

It belongs to the profilin family. In terms of assembly, occurs in many kinds of cells as a complex with monomeric actin in a 1:1 ratio. Specifically expressed in mature pollen grains. Expressed in germinating pollen grains. Expressed in growing pollen tubes (at protein level).

Its subcellular location is the cytoplasm. It localises to the cytoskeleton. Functionally, binds to actin monomers and regulates the organization of the actin cytoskeleton. At high concentrations, profilin prevents the polymerization of actin, whereas it enhances it at low concentrations. At low concentrations, associates with the poly-proline motif of formins to enhance actin filament elongation rate. Acts redundantly with PRF4 to regulate apical actin polymerization at the tip of pollen tube and control polarized pollen tube growth. Functions probably by favoring formin-mediated actin polymerization at pollen tube tips. The polypeptide is Profilin-5 (Arabidopsis thaliana (Mouse-ear cress)).